Consider the following 133-residue polypeptide: Small ribosomal subunit protein uS8 (133 aa).

Positions 1–29 (MANHDPISDMLTRIRNASEKRHETTRIPA) are disordered. Residues 16 to 25 (NASEKRHETT) show a composition bias toward basic and acidic residues.

The protein belongs to the universal ribosomal protein uS8 family. As to quaternary structure, part of the 30S ribosomal subunit. Contacts proteins S5 and S12.

Its function is as follows. One of the primary rRNA binding proteins, it binds directly to 16S rRNA central domain where it helps coordinate assembly of the platform of the 30S subunit. In Prochlorococcus marinus (strain MIT 9211), this protein is Small ribosomal subunit protein uS8.